A 249-amino-acid chain; its full sequence is Esterase YjfP (249 aa).

Displays esterase activity toward palmitoyl-CoA and pNP-butyrate. In Escherichia coli (strain K12), this protein is Esterase YjfP (yjfP).